The primary structure comprises 213 residues: uncharacterized protein (213 aa).

3 helical membrane-spanning segments follow: residues 26 to 46 (FINF…GLKV), 112 to 132 (ASYI…AGIW), and 136 to 156 (AGLA…SFLI).

The protein resides in the cell membrane. This is an uncharacterized protein from Haemophilus influenzae (strain ATCC 51907 / DSM 11121 / KW20 / Rd).